The sequence spans 793 residues: Protein zer-1 homolog (793 aa).

3 LRR repeats span residues 84-108 (RTSL…LMRH), 187-210 (LHDL…ALGS), and 269-294 (LRHL…ESTT).

It belongs to the zyg-11 family.

In terms of biological role, serves as substrate adapter subunit in an E3 ubiquitin ligase complex CG12084-cul-2-elongin BC. Targets substrates bearing N-terminal glycine degrons for proteasomal degradation. The protein is Protein zer-1 homolog of Drosophila melanogaster (Fruit fly).